Here is a 332-residue protein sequence, read N- to C-terminus: Formamidase (332 aa).

In terms of domain architecture, CN hydrolase spans 14–259 (FLAALIQYPV…WEIVTAEVYP (246 aa)). The active-site Proton acceptor is the Glu60. The Proton donor role is filled by Lys132. Cys165 functions as the Nucleophile in the catalytic mechanism.

This sequence belongs to the carbon-nitrogen hydrolase superfamily. Aliphatic amidase family.

The catalysed reaction is formamide + H2O = formate + NH4(+). Is an aliphatic amidase with a restricted substrate specificity, as it only hydrolyzes formamide. The polypeptide is Formamidase (Bacillus cereus (strain Q1)).